The chain runs to 965 residues: Phosphoenolpyruvate carboxylase (965 aa).

Ser-11 bears the Phosphoserine mark. Catalysis depends on residues His-173 and Lys-601.

Belongs to the PEPCase type 1 family. Homotetramer. Mg(2+) serves as cofactor.

The protein resides in the cytoplasm. It catalyses the reaction oxaloacetate + phosphate = phosphoenolpyruvate + hydrogencarbonate. It participates in photosynthesis; C3 acid pathway. Its activity is regulated as follows. By light-reversible phosphorylation. Functionally, through the carboxylation of phosphoenolpyruvate (PEP) it forms oxaloacetate, a four-carbon dicarboxylic acid source for the tricarboxylic acid cycle. This chain is Phosphoenolpyruvate carboxylase (PPC1), found in Solanum tuberosum (Potato).